A 359-amino-acid polypeptide reads, in one-letter code: Cytosolic sulfotransferase 15 (359 aa).

Lysine 101–tryptophan 106 lines the 3'-phosphoadenylyl sulfate pocket. Histidine 168 serves as the catalytic Proton acceptor. Residues arginine 190, serine 198, tyrosine 256, and arginine 322–glycine 324 each bind 3'-phosphoadenylyl sulfate.

This sequence belongs to the sulfotransferase 1 family. In terms of tissue distribution, expressed in leaves.

The protein resides in the cytoplasm. It catalyses the reaction a 12-hydroxyjasmonate + 3'-phosphoadenylyl sulfate = a 12-sulfojasmonate + adenosine 3',5'-bisphosphate + H(+). Sulfotransferase that utilizes 3'-phospho-5'-adenylyl sulfate (PAPS) as sulfonate donor to specifically catalyze the sulfate conjugation of hydroxyjasmonates, with a preference for 12-hydroxyjasmonate over 11-hydroxyjasmonate. No activity with 12-hydroxyjasmonic acid methyl ester, cucurbic acid, 7-iso-cucurbic acid, 6-epi-cucurbic acid, 6-epi-7-iso-cucurbic acid and their methyl esters, prostaglandin E2, arachidonyl alcohol and 11-eicosenol. The chain is Cytosolic sulfotransferase 15 (SOT15) from Arabidopsis thaliana (Mouse-ear cress).